Reading from the N-terminus, the 142-residue chain is MATFNLTVVSAEEKIFEGAVKSIQATGSEGELGILAGHIPLLTGIKPGIVKITREDNSEEVLYVSGGFLEVQPNIVTVLADVAIRGIELDQERILNAKRKAEDNIVAKHADVDHNLLVAKLSKELAKLRAYELTEKLVKNKR.

It belongs to the ATPase epsilon chain family. In terms of assembly, F-type ATPases have 2 components, CF(1) - the catalytic core - and CF(0) - the membrane proton channel. CF(1) has five subunits: alpha(3), beta(3), gamma(1), delta(1), epsilon(1). CF(0) has three main subunits: a, b and c.

The protein localises to the cell inner membrane. Its function is as follows. Produces ATP from ADP in the presence of a proton gradient across the membrane. This is ATP synthase epsilon chain from Actinobacillus succinogenes (strain ATCC 55618 / DSM 22257 / CCUG 43843 / 130Z).